The sequence spans 512 residues: MAPPITDDDLDGLKQPYVTFSSGSASPPRSTAEAMDFEEQILEAIKSDAFLVDWIGEDDKGNPQNLPYWRKWVITMSLALYALSTTFSSSVFGAATHVLAEEFALPAETVVLGCTSLFMVGFATGPIFWGPFSEAFGRTRPLLAGYLGFAVLQLPIADARSLTSICILRFLGGFFGAAPSSILSGILADIWSPRERGFAMPTVGAFLTIGPILGPLIGSVLVQSVLGWRWIANVVAIASFLIALSTFPFLPETYTPLLLARRAERMRHMTRNWAYRSKSEEAQSSIGDFAERYLLRPARMLALEPILLMMTLYVSVSFGLLYNFFLAYPTSFIQERGWDQTTASLPLISILVGAIIAGALLSFSTNSRWAPNAKEGRPQETRLLLMMVGAVSLPAGMFLFAWTSSATMNPWPQILSGIPTGFGIHLINMQGMNYIIDSYKIYANSAIAANTFLRSLFAAGFPILATSMYAAIGVKWGTTILALLAVAMIPIPILFYYFGAKIRAKSKWQPPL.

The next 12 helical transmembrane spans lie at 72-92, 110-130, 142-162, 170-190, 202-222, 230-250, 306-326, 343-363, 383-403, 407-427, 456-476, and 480-500; these read WVIT…SSVF, VVLG…IFWG, LLAG…ARSL, FLGG…LADI, TVGA…SVLV, WIAN…FPFL, ILLM…NFFL, ASLP…LLSF, LLLM…FAWT, TMNP…IHLI, LFAA…GVKW, and ILAL…YFGA.

This sequence belongs to the major facilitator superfamily. CAR1 family.

The protein resides in the cell membrane. In terms of biological role, MFS transporter; part of the gene cluster that mediates the biosynthesis of cercosporin, a light-activated, non-host-selective toxin. The perylenequinone chromophore of cercosporin absorbs light energy to attain an electronically-activated triplet state and produces active oxygen species such as the hydroxyl radical, superoxide, hydrogen peroxide or singlet oxygen upon reaction with oxygen molecules. These reactive oxygen species cause damage to various cellular components including lipids, proteins and nucleic acids. Responsible for secretion and accumulation of cercosporin, but does not play any roles in self-protection against the toxicity of cercosporin. The chain is Cercosporin MFS transporter CTB4 from Cercospora nicotianae (Barn spot disease fungus).